Reading from the N-terminus, the 298-residue chain is MQLLKASDIISHLQIDGIFPGGNAIPCTHLNNYMNIKEKQLMNTIADVQSSRDLRNLPINQVGIKDLRFPITLQTAEGIQSTVARLTMTVYLPAEQKGTHMSRFVALMEQHTEALDFAQLRRLTAEMVALLDSRAGKISVSFPFFRKKTAPVSGIRSLLDYDVSLTGEMKDGAYGHSMKVMIPVTSLCPCSKEISQYGAHNQRSHVTVSLTADAEVGIEEVIDYVEAQASCQLYGLLKRPDEKYVTEKAYENPKFVEDMVRDVATSLIADKRIKSFVVESENFESIHNHSAYAYIAYP.

This sequence belongs to the GTP cyclohydrolase IV family.

The enzyme catalyses GTP + H2O = 7,8-dihydroneopterin 3'-triphosphate + formate + H(+). Its pathway is cofactor biosynthesis; 7,8-dihydroneopterin triphosphate biosynthesis; 7,8-dihydroneopterin triphosphate from GTP: step 1/1. Its function is as follows. Converts GTP to 7,8-dihydroneopterin triphosphate. This chain is GTP cyclohydrolase FolE2, found in Neisseria meningitidis serogroup A / serotype 4A (strain DSM 15465 / Z2491).